The sequence spans 449 residues: Ribulose bisphosphate carboxylase large chain (449 aa).

Lys-5 is subject to N6,N6,N6-trimethyllysine. 2 residues coordinate substrate: Asn-114 and Thr-164. Lys-166 functions as the Proton acceptor in the catalytic mechanism. Lys-168 contacts substrate. Mg(2+)-binding residues include Lys-192, Asp-194, and Glu-195. N6-carboxylysine is present on Lys-192. His-285 (proton acceptor) is an active-site residue. The substrate site is built by Arg-286, His-318, and Ser-370.

This sequence belongs to the RuBisCO large chain family. Type I subfamily. Heterohexadecamer of 8 large chains and 8 small chains; disulfide-linked. The disulfide link is formed within the large subunit homodimers. Mg(2+) serves as cofactor. The disulfide bond which can form in the large chain dimeric partners within the hexadecamer appears to be associated with oxidative stress and protein turnover.

It localises to the plastid. The protein resides in the chloroplast. It catalyses the reaction 2 (2R)-3-phosphoglycerate + 2 H(+) = D-ribulose 1,5-bisphosphate + CO2 + H2O. The enzyme catalyses D-ribulose 1,5-bisphosphate + O2 = 2-phosphoglycolate + (2R)-3-phosphoglycerate + 2 H(+). Functionally, ruBisCO catalyzes two reactions: the carboxylation of D-ribulose 1,5-bisphosphate, the primary event in carbon dioxide fixation, as well as the oxidative fragmentation of the pentose substrate in the photorespiration process. Both reactions occur simultaneously and in competition at the same active site. In Zamioculcas zamiifolia (Aroid palm), this protein is Ribulose bisphosphate carboxylase large chain.